We begin with the raw amino-acid sequence, 463 residues long: Ribosomal protein uS12 methylthiotransferase RimO (463 aa).

The MTTase N-terminal domain occupies 11–126 (PKIGFVSLGC…VMEVVHTHCP (116 aa)). Residues Cys-20, Cys-56, Cys-85, Cys-161, Cys-165, and Cys-168 each contribute to the [4Fe-4S] cluster site. The Radical SAM core domain occupies 147–388 (LTPRHYAYLK…MAVAEEVSTA (242 aa)). The region spanning 391–463 (QRRVGQTMQV…QGHDLVGVPV (73 aa)) is the TRAM domain.

Belongs to the methylthiotransferase family. RimO subfamily. [4Fe-4S] cluster serves as cofactor.

The protein resides in the cytoplasm. The catalysed reaction is L-aspartate(89)-[ribosomal protein uS12]-hydrogen + (sulfur carrier)-SH + AH2 + 2 S-adenosyl-L-methionine = 3-methylsulfanyl-L-aspartate(89)-[ribosomal protein uS12]-hydrogen + (sulfur carrier)-H + 5'-deoxyadenosine + L-methionine + A + S-adenosyl-L-homocysteine + 2 H(+). Catalyzes the methylthiolation of an aspartic acid residue of ribosomal protein uS12. The protein is Ribosomal protein uS12 methylthiotransferase RimO of Acidovorax sp. (strain JS42).